A 256-amino-acid chain; its full sequence is Triosephosphate isomerase (256 aa).

Residue 9 to 11 (NWK) coordinates substrate. The active-site Electrophile is His-97. Glu-169 serves as the catalytic Proton acceptor. Substrate contacts are provided by residues Gly-175, Ser-214, and 235–236 (GG).

It belongs to the triosephosphate isomerase family. In terms of assembly, homodimer.

Its subcellular location is the cytoplasm. The enzyme catalyses D-glyceraldehyde 3-phosphate = dihydroxyacetone phosphate. It participates in carbohydrate biosynthesis; gluconeogenesis. It functions in the pathway carbohydrate degradation; glycolysis; D-glyceraldehyde 3-phosphate from glycerone phosphate: step 1/1. In terms of biological role, involved in the gluconeogenesis. Catalyzes stereospecifically the conversion of dihydroxyacetone phosphate (DHAP) to D-glyceraldehyde-3-phosphate (G3P). In Vibrio parahaemolyticus serotype O3:K6 (strain RIMD 2210633), this protein is Triosephosphate isomerase.